A 710-amino-acid chain; its full sequence is Early transcription factor 82 kDa subunit (710 aa).

This sequence belongs to the poxviridae VETF large subunit family. In terms of assembly, heterodimer of a 70 kDa and a 82 kDa subunit. Part of the early transcription complex composed of ETF, RAP94/OPG109, and the DNA-directed RNA polymerase.

The protein localises to the virion. Acts with RNA polymerase to initiate transcription from early gene promoters. Is recruited by the RPO-associated protein of 94 kDa RAP94/OPG109 to form the early transcription complex, which also contains the core RNA polymerase. ETF heterodimer binds to early gene promoters. The protein is Early transcription factor 82 kDa subunit (OPG133) of Vaccinia virus (strain Ankara) (VACV).